The primary structure comprises 383 residues: Phosphoenolpyruvate/phosphate translocator 2, chloroplastic (383 aa).

Residues 1–55 constitute a chloroplast transit peptide; that stretch reads MFALTFLNPNPRLPSPLFLAKSTPESALSRRSRAFSSSNSYPWRPNLRFNGFKLK. A run of 8 helical transmembrane segments spans residues 76 to 96, 108 to 128, 143 to 163, 179 to 199, 210 to 232, 253 to 273, 299 to 319, and 350 to 369; these read GLKL…YNIF, ATVT…MWLL, VIVQ…VSLG, FFTV…WIVC, LASF…SNVT, INLF…LAIL, IMSL…YMIL, and VSPL…YLYS. The region spanning 93–212 is the EamA domain; that stretch reads YNIFNKQVLR…PIVAGVSLAS (120 aa).

It belongs to the TPT transporter family. PPT (TC 2.A.7.9) subfamily. Widely expressed in leaves throughout development. In flowers, expressed in sepals and pistils.

It is found in the plastid. It localises to the chloroplast membrane. In terms of biological role, phosphoenolpyruvate/phosphate translocator that transports phosphoenolpyruvate (PEP), 2-phosphoglycerate and 3-phosphoglycerate. The sequence is that of Phosphoenolpyruvate/phosphate translocator 2, chloroplastic (PPT2) from Arabidopsis thaliana (Mouse-ear cress).